We begin with the raw amino-acid sequence, 689 residues long: Glycine--tRNA ligase beta subunit (689 aa).

This sequence belongs to the class-II aminoacyl-tRNA synthetase family. In terms of assembly, tetramer of two alpha and two beta subunits.

It localises to the cytoplasm. The enzyme catalyses tRNA(Gly) + glycine + ATP = glycyl-tRNA(Gly) + AMP + diphosphate. This is Glycine--tRNA ligase beta subunit from Salmonella typhi.